Here is a 649-residue protein sequence, read N- to C-terminus: 2-hydroxyacyl-CoA lyase 2 (649 aa).

The helical transmembrane segment at 2 to 21 (FHLIPFVVAFLLVFLTWFLI) threads the bilayer. Thiamine diphosphate is bound at residue glutamate 84. Positions 474-554 (DFVGSAAYIL…AIGVIGNDAC (81 aa)) are thiamine pyrophosphate binding. Mg(2+) is bound by residues aspartate 525 and asparagine 551.

Belongs to the TPP enzyme family. It depends on Mg(2+) as a cofactor. Thiamine diphosphate serves as cofactor.

Its subcellular location is the endoplasmic reticulum membrane. It catalyses the reaction 2-hydroxyoctadecanoyl-CoA = heptadecanal + formyl-CoA. The catalysed reaction is (2R)-hydroxyhexadecanoyl-CoA = pentadecanal + formyl-CoA. Endoplasmic reticulum 2-OH acyl-CoA lyase involved in the cleavage (C1 removal) reaction in the fatty acid alpha-oxydation in a thiamine pyrophosphate (TPP)-dependent manner. Involved in the phytosphingosine degradation pathway. This is 2-hydroxyacyl-CoA lyase 2 (ilvbl) from Xenopus laevis (African clawed frog).